Here is a 182-residue protein sequence, read N- to C-terminus: QELVDVEGKTVRNGGTYYLVPQLRPGGGGMEAAKVGNEDCPLTVVKSLDENSNGEPIRIASRLRSTFIPEYSLVNLGFADPPKCAPSPFWTVVKDQSERLPSIKLGEYKDSELDYPFKFERVYAASKMYAYKLLYCGSEDEEEEMMCKDIGVYRDQEGYQRLVVSKHNPLVVGFKKAESSTT.

Pyrrolidone carboxylic acid is present on Q1. 2 disulfides stabilise this stretch: C40–C84 and C136–C147.

This sequence belongs to the protease inhibitor I3 (leguminous Kunitz-type inhibitor) family.

The polypeptide is Trypsin inhibitor 2 (Psophocarpus tetragonolobus (Winged bean)).